A 763-amino-acid chain; its full sequence is Amyloid beta precursor like protein 2 (763 aa).

A signal peptide spans 1–31; the sequence is MAATGTAAAAATGRLLLLLLVGLTAPALALA. At 32 to 692 the chain is on the extracellular side; that stretch reads GYIEALAANA…PLREDFSLSS (661 aa). A GFLD subdomain region spans residues 46 to 139; that stretch reads AVAEPQIAMF…PFKCLVGEFV (94 aa). The region spanning 46 to 205 is the E1 domain; that stretch reads AVAEPQIAMF…HGTEYVCCPQ (160 aa). Cystine bridges form between Cys-56–Cys-80, Cys-91–Cys-133, Cys-116–Cys-123, Cys-149–Cys-203, Cys-160–Cys-190, and Cys-174–Cys-202. The segment at 147 to 205 is cuBD subdomain; the sequence is EKCQFFHKERMEVCENHQHWHTVVKEACLTQGMTLYSYGMLLPCGVDQFHGTEYVCCPQ. Positions 163, 167, and 184 each coordinate Cu cation. Positions 211–299 are disordered; sequence SVSKEEEEED…EPGSDGTMSD (89 aa). Acidic residues-rich tracts occupy residues 215-233 and 242-269; these read EEEEEDEEEEEEEDEEEDY and TEADLEDFTEAAVDEDDEDEEEGEEVVE. Residues 270–282 show a composition bias toward basic and acidic residues; it reads DRDYYYDTFKGDD. A BPTI/Kunitz inhibitor domain is found at 306–364; the sequence is VKAVCSQEAMTGPCRAVMPRWYFDLSKGKCVRFIYGGCGGNRNNFESEDYCMAVCKAMI. 3 cysteine pairs are disulfide-bonded: Cys-310–Cys-360, Cys-319–Cys-343, and Cys-335–Cys-356. In terms of domain architecture, E2 spans 373–564; it reads DVDVYFETSA…QEIQEEIDEL (192 aa). Ser-590 is modified (phosphoserine; by FAM20C). Residue Ser-626 is glycosylated (O-linked (Xyl...) (chondroitin sulfate) serine). The chain crosses the membrane as a helical span at residues 693–716; it reads SALIGLLVIAVAIATVIVISLVML. The Cytoplasmic segment spans residues 717–763; it reads RKRQYGTISHGIVEVDPMLTPEERHLNKMQNHGYENPTYKYLEQMQI. Residues 749 to 763 are interaction with DAB2; that stretch reads GYENPTYKYLEQMQI. The NPXY motif motif lies at 750 to 755; the sequence is YENPTY.

The protein belongs to the APP family. Interacts with CPEB1. Interacts (via NPXY motif) with DAB2 (via PID domain); the interaction is impaired by tyrosine phosphorylation of the NPXY motif. Interacts (via cytoplasmic domain) with APBB2/FE65L. Interacts (via intracellular domain) with APBB3/FE65L2. In terms of processing, the BPTI/Kunitz inhibitor domain is O-glycosylated. In terms of tissue distribution, expressed in placenta, brain, heart, lung, liver, kidney and endothelial tissues.

Its subcellular location is the cell membrane. The protein resides in the nucleus. In terms of biological role, may play a role in the regulation of hemostasis. The soluble form may have inhibitory properties towards coagulation factors. May interact with cellular G-protein signaling pathways. May bind to the DNA 5'-GTCACATG-3'(CDEI box). Inhibits trypsin, chymotrypsin, plasmin, factor XIA and plasma and glandular kallikrein. Modulates the Cu/Zn nitric oxide-catalyzed autodegradation of GPC1 heparan sulfate side chains in fibroblasts. In Homo sapiens (Human), this protein is Amyloid beta precursor like protein 2.